A 42-amino-acid polypeptide reads, in one-letter code: Photosystem I reaction center subunit IX (42 aa).

Residues 7–27 form a helical membrane-spanning segment; that stretch reads YLSTAPVLATIWFIILAGLLI.

This sequence belongs to the PsaJ family.

The protein localises to the plastid. Its subcellular location is the chloroplast thylakoid membrane. In terms of biological role, may help in the organization of the PsaE and PsaF subunits. The protein is Photosystem I reaction center subunit IX of Mesostigma viride (Green alga).